Here is a 304-residue protein sequence, read N- to C-terminus: Sulfate adenylyltransferase subunit 2 2 (304 aa).

It belongs to the PAPS reductase family. CysD subfamily. As to quaternary structure, heterodimer composed of CysD, the smaller subunit, and CysN.

The catalysed reaction is sulfate + ATP + H(+) = adenosine 5'-phosphosulfate + diphosphate. It participates in sulfur metabolism; hydrogen sulfide biosynthesis; sulfite from sulfate: step 1/3. Its function is as follows. With CysN forms the ATP sulfurylase (ATPS) that catalyzes the adenylation of sulfate producing adenosine 5'-phosphosulfate (APS) and diphosphate, the first enzymatic step in sulfur assimilation pathway. APS synthesis involves the formation of a high-energy phosphoric-sulfuric acid anhydride bond driven by GTP hydrolysis by CysN coupled to ATP hydrolysis by CysD. This is Sulfate adenylyltransferase subunit 2 2 from Marinobacter nauticus (strain ATCC 700491 / DSM 11845 / VT8) (Marinobacter aquaeolei).